A 477-amino-acid polypeptide reads, in one-letter code: Multidrug resistance protein PmpM (477 aa).

A run of 12 helical transmembrane segments spans residues leucine 21–valine 41, alanine 56–leucine 76, leucine 104–leucine 124, leucine 133–leucine 153, methionine 171–glycine 191, glycine 202–valine 222, leucine 253–isoleucine 273, isoleucine 286–threonine 306, glycine 326–leucine 346, valine 360–leucine 380, methionine 398–leucine 418, and leucine 431–alanine 451.

The protein belongs to the multi antimicrobial extrusion (MATE) (TC 2.A.66.1) family.

It is found in the cell inner membrane. In terms of biological role, multidrug efflux pump that functions as an H(+)/drug antiporter. Confers resistance to benzalkonium chloride, fluoroquinolones, ethidium bromide, acriflavine and tetraphenylphosphonium chloride. In Pseudomonas aeruginosa (strain ATCC 15692 / DSM 22644 / CIP 104116 / JCM 14847 / LMG 12228 / 1C / PRS 101 / PAO1), this protein is Multidrug resistance protein PmpM (pmpM).